Here is a 714-residue protein sequence, read N- to C-terminus: Ubiquitin-like modifier-activating enzyme ATG7 (714 aa).

Positions 380-390 match the GXGXXG motif motif; that stretch reads KCLLLGAGTLG. Cys565 acts as the Glycyl thioester intermediate in catalysis. 2 disordered regions span residues 591-616 and 691-714; these read PQRE…DPPD and MQNE…GEML. The span at 695-714 shows a compositional bias: acidic residues; the sequence is VDWDEDEDVAAAEEGDGEML.

Belongs to the ATG7 family. In terms of assembly, homodimer.

The protein localises to the cytoplasm. It is found in the preautophagosomal structure. In terms of biological role, E1-like activating enzyme involved in the 2 ubiquitin-like systems required for cytoplasm to vacuole transport (Cvt) and autophagy. Activates ATG12 for its conjugation with ATG5 and ATG8 for its conjugation with phosphatidylethanolamine. Both systems are needed for the ATG8 association to Cvt vesicles and autophagosomes membranes. Autophagy is essential for maintenance of amino acid levels and protein synthesis under nitrogen starvation. Required for selective autophagic degradation of the nucleus (nucleophagy) as well as for mitophagy which contributes to regulate mitochondrial quantity and quality by eliminating the mitochondria to a basal level to fulfill cellular energy requirements and preventing excess ROS production. Plays a role in the regulation of filamentous growth and chronological longevity. The chain is Ubiquitin-like modifier-activating enzyme ATG7 (ATG7) from Pyricularia oryzae (strain 70-15 / ATCC MYA-4617 / FGSC 8958) (Rice blast fungus).